We begin with the raw amino-acid sequence, 276 residues long: MSITPHRLPVAPVIVREAYLSLLRKGWRPGDRDLKTPRNVKIETGIIEKAEGSALVKLGKTQVIAGVKAGVGAPFKDTPNQGVLTVHAEFVPLASPVFEPGPPDENAIELARVVDRSLREVGAVDLESLVIRPGEKVWVLWVDLYIIDHDGNLFDASMLATMAVLLTARLPRYEESETGEIIISKEGEGEELKVKTRVVTVTTAKIDRYIVVDPNIEEEAVSDVRLVTAVDENGRIVGLQKTGMGSLTEADIETMIGYSLEASKVYFKALEEAIKP.

The protein belongs to the RNase PH family. Rrp42 subfamily. In terms of assembly, component of the archaeal exosome complex. Forms a hexameric ring-like arrangement composed of 3 Rrp41-Rrp42 heterodimers. The hexameric ring associates with a trimer of Rrp4 and/or Csl4 subunits.

It is found in the cytoplasm. Its function is as follows. Non-catalytic component of the exosome, which is a complex involved in RNA degradation. Contributes to the structuring of the Rrp41 active site. This chain is Exosome complex component Rrp42, found in Aeropyrum pernix (strain ATCC 700893 / DSM 11879 / JCM 9820 / NBRC 100138 / K1).